The sequence spans 295 residues: Outer surface protein B (295 aa).

Positions 1 to 16 are cleaved as a signal peptide; that stretch reads MKQYLLGFTLVFALIA. Residue Cys17 is the site of N-palmitoyl cysteine attachment. A lipid anchor (S-diacylglycerol cysteine) is attached at Cys17.

The protein resides in the cell outer membrane. This Borreliella burgdorferi (Lyme disease spirochete) protein is Outer surface protein B (ospB).